A 545-amino-acid chain; its full sequence is E3 ubiquitin-protein ligase ipaH9.8 (545 aa).

The interaction with target proteins stretch occupies residues 1 to 242 (MLPINNNFSL…YHGPRIYFSM (242 aa)). 8 LRR repeats span residues 57–77 (NSDE…NLPA), 78–99 (QITL…PVTL), 100–117 (KKLY…VLPP), 118–139 (ALES…PDSL), 140–157 (LTMN…SLPQ), 158–179 (ALKN…SEGN), 182–203 (VVRE…ILNL), and 205–228 (NECS…QRLT). The linker stretch occupies residues 243-250 (SDGQQNTL). The E3 ubiquitin-protein ligase catalytic domain stretch occupies residues 251 to 545 (HRPLADAVTA…SENGSQLHHS (295 aa)). Residues 253-545 (PLADAVTAWF…SENGSQLHHS (293 aa)) enclose the NEL domain. C337 acts as the Glycyl thioester intermediate in catalysis.

Belongs to the LRR-containing bacterial E3 ligase family. Also interacts with human and mouse U2AF1 (U2AF35). Ubiquitinated in the presence of host E1 ubiquitin-activating enzyme, E2 ubiquitin-conjugating enzyme and ubiquitin.

It localises to the secreted. Its subcellular location is the host cytoplasm. The protein localises to the host nucleus. It carries out the reaction S-ubiquitinyl-[E2 ubiquitin-conjugating enzyme]-L-cysteine + [acceptor protein]-L-lysine = [E2 ubiquitin-conjugating enzyme]-L-cysteine + N(6)-ubiquitinyl-[acceptor protein]-L-lysine.. Its activity is regulated as follows. Exists in an autoinhibited state in the absence of substrate protein, due to interactions of the leucine-rich repeats with NEL domain. Is activated upon binding to a substrate protein. Effector E3 ubiquitin ligase that interferes with host's ubiquitination pathway and modulates the acute inflammatory responses, thus facilitating bacterial colonization within the host cell. Interacts with IKBKG (NEMO) and TNIP1 (ABIN-1), a ubiquitin-binding adapter protein, which results in TNIP1-dependent 'Lys-27'-linked polyubiquitination of IKBKG. Consequently, polyubiquitinated IKBKG undergoes proteasome-dependent degradation, which perturbs NF-kappa-B activation during bacterial infection. Mediates polyubiquitination of host U2AF1, leading to its proteasomal degradation. Catalyzes 'Lys-48'-linked polyubiquitination and subsequent degradation of a subset of host guanylate-binding proteins (GBP1, GBP2, GBP4 and GBP6), thereby suppressing host cell defense. In contrast, host GBP3 and GBP7 are not ubiquitinated by IpaH9.8. Uses UBE2D2 (UBCH5B) as an E2 ubiquitin-conjugating enzyme. The chain is E3 ubiquitin-protein ligase ipaH9.8 (ipaH9.8) from Shigella boydii serotype 18 (strain CDC 3083-94 / BS512).